A 175-amino-acid chain; its full sequence is Epididymal-specific lipocalin-8 (175 aa).

Positions 1–25 (MPGAAEALPTVTVTLVAGAVPPASG) are cleaved as a signal peptide. Residues asparagine 66 and asparagine 74 are each glycosylated (N-linked (GlcNAc...) asparagine). A disulfide bridge connects residues cysteine 79 and cysteine 166.

The protein belongs to the calycin superfamily. Lipocalin family.

It localises to the secreted. In terms of biological role, may play a role in male fertility. May act as a retinoid carrier protein within the epididymis. The sequence is that of Epididymal-specific lipocalin-8 (LCN8) from Homo sapiens (Human).